The sequence spans 135 residues: Endocuticle structural glycoprotein SgAbd-2 (135 aa).

At glutamine 1 the chain carries Pyrrolidone carboxylic acid. Threonine 11 and threonine 100 each carry an O-linked (HexNAc...) threonine glycan. The 71-residue stretch at aspartate 32 to proline 102 folds into the Chitin-binding type R&amp;R domain.

Functionally, component of the abdominal endocuticle. In Schistocerca gregaria (Desert locust), this protein is Endocuticle structural glycoprotein SgAbd-2.